The chain runs to 302 residues: MAGFVYSPYNAYQGYGGNFGQNPHRPQAFPKNKQAAWKSNKSSEPPDYLDHFQRAQLKAILSQVNPNLTPRLRKVNTKEMGVQVNPRVDTGVQCSLGPRTLRRPPPPPSSPVKPTDCARFSRPVAVYSPVVDRRLFSLPQGGRLPKKSLPAPDSQSQPLKDRGPSPEEKEPETKEALEKSPVPGAEEPNEEEPNKPAFQFLEQKYGYFHCKDCKTRWESAYVWCISGSNKVYFKQLCRKCQKGFNPYRVEVIQCQVCAKTRCSCPQKKRHIDLKRPHRQELCGRCKNKKLSCDNTYSYKYIV.

3 disordered regions span residues Y15 to P46, V88 to C117, and L138 to K195. A compositionally biased stretch (basic and acidic residues) spans L159–E178. Residues Q203–K288 form a 3CxxC-type zinc finger.

It belongs to the ZAR1 family. In terms of tissue distribution, oocyte-specific.

It is found in the cytoplasm. The protein localises to the cytoplasmic ribonucleoprotein granule. Its function is as follows. mRNA-binding protein required for maternal mRNA storage, translation and degradation during oocyte maturation. Probably promotes formation of some phase-separated membraneless compartment that stores maternal mRNAs in oocytes: acts by undergoing liquid-liquid phase separation upon binding to maternal mRNAs. Binds to the 3'-UTR of maternal mRNAs, inhibiting their translation. In Xenopus laevis (African clawed frog), this protein is Zygote arrest protein 2.S.